Consider the following 148-residue polypeptide: Lysozyme C (148 aa).

A signal peptide spans 1–18 (MKALIILGLVLLSVTVQG). Residues 19 to 148 (KIFERCELAR…VSQYVEGCGV (130 aa)) form the C-type lysozyme domain. 4 disulfide bridges follow: Cys-24–Cys-146, Cys-48–Cys-134, Cys-83–Cys-99, and Cys-95–Cys-113. Catalysis depends on residues Glu-53 and Asp-71.

The protein belongs to the glycosyl hydrolase 22 family. Monomer.

It catalyses the reaction Hydrolysis of (1-&gt;4)-beta-linkages between N-acetylmuramic acid and N-acetyl-D-glucosamine residues in a peptidoglycan and between N-acetyl-D-glucosamine residues in chitodextrins.. Its function is as follows. Lysozymes have primarily a bacteriolytic function; those in tissues and body fluids are associated with the monocyte-macrophage system and enhance the activity of immunoagents. The sequence is that of Lysozyme C (LYZ) from Colobus angolensis (Angolan colobus).